A 128-amino-acid polypeptide reads, in one-letter code: Hemoglobin subunit beta-1 (128 aa).

The region spanning 2 to 128 (HWTAEEKALV…VVDALSKGYH (127 aa)) is the Globin domain. Heme b is bound by residues His51 and His74.

The protein belongs to the globin family. In terms of assembly, hb 1 is a heterotetramer of two alpha and two beta-1 chains. In terms of tissue distribution, red blood cells (at protein level).

Involved in oxygen transport from gills to the various peripheral tissues. The sequence is that of Hemoglobin subunit beta-1 from Somniosus microcephalus (Greenland sleeper shark).